Reading from the N-terminus, the 290-residue chain is OTU domain-containing protein 6A (290 aa).

The tract at residues 27-117 (QTLKASVPKN…RRHQERMPAA (91 aa)) is disordered. Basic and acidic residues predominate over residues 49-68 (SRLEAEMEQRHKQELEKFGE). The span at 95-108 (KAQKRRDRRAHQER) shows a compositional bias: basic residues. Residues 142 to 276 (LEMKTIPADG…GEHYNSVKPI (135 aa)) enclose the OTU domain. A cys-loop region spans residues 147 to 153 (IPADGHC). Residue Asp-150 is part of the active site. Cys-153 serves as the catalytic Nucleophile. The interval 211–221 (IVHNASWGGQL) is variable-loop. The interval 259-269 (YLHYACDFGEH) is his-loop. Residue His-269 is part of the active site.

It carries out the reaction Thiol-dependent hydrolysis of ester, thioester, amide, peptide and isopeptide bonds formed by the C-terminal Gly of ubiquitin (a 76-residue protein attached to proteins as an intracellular targeting signal).. Functionally, deubiquitinating enzyme that hydrolyzes 'Lys-27'-, 'Lys-29'- and 'Lys-33'-linked polyubiquitin chains. Also able to hydrolyze 'Lys-11'-linked ubiquitin chains. This Mus musculus (Mouse) protein is OTU domain-containing protein 6A (Otud6a).